The sequence spans 308 residues: N-acetyl-gamma-glutamyl-phosphate reductase (308 aa).

The active site involves C117.

The protein belongs to the NAGSA dehydrogenase family. Type 2 subfamily.

The protein resides in the cytoplasm. The enzyme catalyses N-acetyl-L-glutamate 5-semialdehyde + phosphate + NADP(+) = N-acetyl-L-glutamyl 5-phosphate + NADPH + H(+). The protein operates within amino-acid biosynthesis; L-arginine biosynthesis; N(2)-acetyl-L-ornithine from L-glutamate: step 3/4. In terms of biological role, catalyzes the NADPH-dependent reduction of N-acetyl-5-glutamyl phosphate to yield N-acetyl-L-glutamate 5-semialdehyde. In Sinorhizobium fredii (strain NBRC 101917 / NGR234), this protein is N-acetyl-gamma-glutamyl-phosphate reductase.